Here is a 232-residue protein sequence, read N- to C-terminus: Glycerol-3-phosphate acyltransferase 4 (232 aa).

6 helical membrane-spanning segments follow: residues 4-24 (VFLI…AYLL), 54-76 (LGLA…AGWL), 80-99 (LWQQ…WPVF), 107-127 (GIAT…LIAL), 143-163 (VFLG…FFGV), and 168-188 (TVTW…LMAP).

The protein belongs to the PlsY family. Probably interacts with PlsX.

The protein resides in the cell membrane. The catalysed reaction is an acyl phosphate + sn-glycerol 3-phosphate = a 1-acyl-sn-glycero-3-phosphate + phosphate. The protein operates within lipid metabolism; phospholipid metabolism. Its function is as follows. Catalyzes the transfer of an acyl group from acyl-phosphate (acyl-PO(4)) to glycerol-3-phosphate (G3P) to form lysophosphatidic acid (LPA). This enzyme utilizes acyl-phosphate as fatty acyl donor, but not acyl-CoA or acyl-ACP. The polypeptide is Glycerol-3-phosphate acyltransferase 4 (Dehalococcoides mccartyi (strain CBDB1)).